The sequence spans 790 residues: Valine--tRNA ligase (790 aa).

The 'HIGH' region motif lies at 40–50 (PTVSGKMHMGH). Positions 521-525 (KMSKS) match the 'KMSKS' region motif. K524 contributes to the ATP binding site.

Belongs to the class-I aminoacyl-tRNA synthetase family. ValS type 2 subfamily.

It localises to the cytoplasm. It carries out the reaction tRNA(Val) + L-valine + ATP = L-valyl-tRNA(Val) + AMP + diphosphate. Its function is as follows. Catalyzes the attachment of valine to tRNA(Val). As ValRS can inadvertently accommodate and process structurally similar amino acids such as threonine, to avoid such errors, it has a 'posttransfer' editing activity that hydrolyzes mischarged Thr-tRNA(Val) in a tRNA-dependent manner. This chain is Valine--tRNA ligase, found in Thermoplasma volcanium (strain ATCC 51530 / DSM 4299 / JCM 9571 / NBRC 15438 / GSS1).